Here is a 291-residue protein sequence, read N- to C-terminus: Bifunctional protein FolD (291 aa).

NADP(+) contacts are provided by residues 168–170 (GRG), threonine 195, and valine 236.

This sequence belongs to the tetrahydrofolate dehydrogenase/cyclohydrolase family. In terms of assembly, homodimer.

It catalyses the reaction (6R)-5,10-methylene-5,6,7,8-tetrahydrofolate + NADP(+) = (6R)-5,10-methenyltetrahydrofolate + NADPH. The enzyme catalyses (6R)-5,10-methenyltetrahydrofolate + H2O = (6R)-10-formyltetrahydrofolate + H(+). The protein operates within one-carbon metabolism; tetrahydrofolate interconversion. Functionally, catalyzes the oxidation of 5,10-methylenetetrahydrofolate to 5,10-methenyltetrahydrofolate and then the hydrolysis of 5,10-methenyltetrahydrofolate to 10-formyltetrahydrofolate. The polypeptide is Bifunctional protein FolD (Bifidobacterium longum (strain DJO10A)).